A 260-amino-acid polypeptide reads, in one-letter code: MAARRISDEPAYVLHRYDWSESSLILDVFTRHHGRVALVARGAKKPTSNFRPVLLPLQPLRITYTLNGEGREEVHGLKGAEWVGGHVMPTGDALLSGLYLNELLMRLLAREDTHAALFDAYAGVVRVLASEHGDALEPVLRSFELLLLREIGLLPALDVETSTLAPLAPAARYALVPEAGLRPALPSDRSTLGGAQWRQLERSLGEAQPYTATLRAIVAGLAASASPAADLKPQLRALLQYHCGSPMLRTRQLMIDLQSL.

It belongs to the RecO family.

In terms of biological role, involved in DNA repair and RecF pathway recombination. The chain is DNA repair protein RecO from Paracidovorax citrulli (strain AAC00-1) (Acidovorax citrulli).